The primary structure comprises 286 residues: L-rhamnose-binding lectin CSL1 (286 aa).

SUEL-type lectin domains are found at residues 96-186 (TTCE…YICL) and 193-280 (TCEG…YTCL).

Its function is as follows. L-rhamnose binding lectin. Has hemagglutinating activity towards rabbit erythrocytes, but not human type B erythrocytes. Hemagglutinating activity is inhibited by smooth-type lipopolysaccharide (LPS) from K.pneumoniae, E.coli K-235, S.flexneri 1A, A.salmonicida and S.minnesota and rough-type LPS from S.flexneri, but not by rough-type LPS from E.coli K12 and E.coli EH100. Agglutinates E.coli K12 and B.subtilis. The sequence is that of L-rhamnose-binding lectin CSL1 from Oncorhynchus keta (Chum salmon).